A 346-amino-acid polypeptide reads, in one-letter code: Sensor protein kinase GraS (346 aa).

Helical transmembrane passes span 15-35 and 43-63; these read MNWI…SLID and LFYI…LTYF. In terms of domain architecture, Histidine kinase spans 126–332; sequence EFVHDIKTPV…TVRLIFPLQN (207 aa).

In terms of assembly, interacts with GraX.

The protein localises to the cell membrane. It catalyses the reaction ATP + protein L-histidine = ADP + protein N-phospho-L-histidine.. Its function is as follows. Member of the two-component regulatory system GraR/GraS involved in resistance against cationic antimicrobial peptides (CAMPs). Functions as a sensor protein kinase which phosphorylates GraR through the auxiliary protein GraX. In turn, GraR up-regulates many genes such as adhesins, exoproteins, transporters, toxins, and proteins involved in cell wall synthesis. Down-regulates the expression of many genes involved in RNA and amino acid synthesis or glycolysis. This is Sensor protein kinase GraS (graS) from Staphylococcus aureus (strain bovine RF122 / ET3-1).